We begin with the raw amino-acid sequence, 218 residues long: Ribose-5-phosphate isomerase A (218 aa).

Substrate-binding positions include 28 to 31, 81 to 84, and 94 to 97; these read TGST, DGAD, and KGGG. Residue glutamate 103 is the Proton acceptor of the active site. Position 121 (lysine 121) interacts with substrate.

This sequence belongs to the ribose 5-phosphate isomerase family. As to quaternary structure, homodimer.

It catalyses the reaction aldehydo-D-ribose 5-phosphate = D-ribulose 5-phosphate. It participates in carbohydrate degradation; pentose phosphate pathway; D-ribose 5-phosphate from D-ribulose 5-phosphate (non-oxidative stage): step 1/1. Its function is as follows. Catalyzes the reversible conversion of ribose-5-phosphate to ribulose 5-phosphate. In Thioalkalivibrio sulfidiphilus (strain HL-EbGR7), this protein is Ribose-5-phosphate isomerase A.